The following is a 193-amino-acid chain: Potassium-transporting ATPase KdpC subunit (193 aa).

The chain crosses the membrane as a helical span at residues 7–27 (PMIVIFAVLAALTGLAYPAVM).

It belongs to the KdpC family. In terms of assembly, the system is composed of three essential subunits: KdpA, KdpB and KdpC.

The protein resides in the cell inner membrane. Functionally, part of the high-affinity ATP-driven potassium transport (or Kdp) system, which catalyzes the hydrolysis of ATP coupled with the electrogenic transport of potassium into the cytoplasm. This subunit acts as a catalytic chaperone that increases the ATP-binding affinity of the ATP-hydrolyzing subunit KdpB by the formation of a transient KdpB/KdpC/ATP ternary complex. This is Potassium-transporting ATPase KdpC subunit from Paraburkholderia phymatum (strain DSM 17167 / CIP 108236 / LMG 21445 / STM815) (Burkholderia phymatum).